The primary structure comprises 441 residues: MIRGKIDILVVDDDVSHCTILQALLRGWGYNVALAYSGHDALAQVREKVFDLVLCDVRMAEMDGIATLKEIKALNPAIPILIMTAFSSVETAVEALKAGALDYLIKPLDFDRLQETLEKALAHTRETGAELPSASAAQFGMIGSSPAMQHLLNEIAMVAPSDATVLIHGDSGTGKELVARALHACSARSDKPLVTLNCAALNESLLESELFGHEKGAFTGADKRREGRFVEADGGTLFLDEIGDISPLMQVRLLRAIQEREVQRVGSNQTISVDVWLIAATHRDLAEEVSAGRFRQDLYYRLNVVAIEMPSLRQRREDIPLLADHFLRRFAERNRKAVKGFTPQAMDLLIHYDWPGNIRELENAIERAVVLLTGEYISERELPLAIAATPIKAENSAEIQPLVDVEKEVILAALEKTGGNKTEAARQLGITRKTLLAKLSR.

The 115-residue stretch at 7 to 121 (DILVVDDDVS…RLQETLEKAL (115 aa)) folds into the Response regulatory domain. At Asp56 the chain carries 4-aspartylphosphate. The Sigma-54 factor interaction domain occupies 141 to 370 (MIGSSPAMQH…LENAIERAVV (230 aa)). Residues Gly172, Thr173, Arg329, and Arg359 each coordinate ATP. Positions 421-440 (KTEAARQLGITRKTLLAKLS) form a DNA-binding region, H-T-H motif.

In terms of processing, phosphorylated by ZraS.

The protein localises to the cytoplasm. With respect to regulation, activity of the ZraS/ZraR two-component system is repressed by the zinc-bound form of ZraP, which probably interacts with the periplasmic region of ZraS. In terms of biological role, part of the Zra signaling pathway, an envelope stress response (ESR) system composed of the periplasmic accessory protein ZraP, the histidine kinase ZraS and the transcriptional regulator ZraR. The ZraPSR system contributes to antibiotic resistance and is important for membrane integrity in the presence of membrane-targeting biocides. ZraR is a member of the two-component regulatory system ZraS/ZraR. When activated by ZraS, acts in conjunction with sigma-54 to regulate the expression of zraP in the presence of high Zn(2+) or Pb(2+) concentrations. Also positively autoregulates the expression of the zraSR operon. The sequence is that of Transcriptional regulatory protein ZraR (zraR) from Salmonella typhi.